The primary structure comprises 294 residues: Diaminopimelate epimerase (294 aa).

Residues Asn-13, Gln-46, and Asn-69 each coordinate substrate. Cys-78 acts as the Proton donor in catalysis. Substrate is bound by residues 79 to 80, Asn-173, Asn-206, and 224 to 225; these read GN and ER. The Proton acceptor role is filled by Cys-233. 234 to 235 contacts substrate; the sequence is GT.

The protein belongs to the diaminopimelate epimerase family. Homodimer.

The protein resides in the cytoplasm. It carries out the reaction (2S,6S)-2,6-diaminopimelate = meso-2,6-diaminopimelate. The protein operates within amino-acid biosynthesis; L-lysine biosynthesis via DAP pathway; DL-2,6-diaminopimelate from LL-2,6-diaminopimelate: step 1/1. Its function is as follows. Catalyzes the stereoinversion of LL-2,6-diaminopimelate (L,L-DAP) to meso-diaminopimelate (meso-DAP), a precursor of L-lysine and an essential component of the bacterial peptidoglycan. The chain is Diaminopimelate epimerase from Variovorax paradoxus (strain S110).